The chain runs to 694 residues: Elongation factor G (694 aa).

Positions Glu8 to Val283 constitute a tr-type G domain. GTP contacts are provided by residues Ala17–Thr24, Asp81–His85, and Asn135–Asp138.

It belongs to the TRAFAC class translation factor GTPase superfamily. Classic translation factor GTPase family. EF-G/EF-2 subfamily.

It localises to the cytoplasm. In terms of biological role, catalyzes the GTP-dependent ribosomal translocation step during translation elongation. During this step, the ribosome changes from the pre-translocational (PRE) to the post-translocational (POST) state as the newly formed A-site-bound peptidyl-tRNA and P-site-bound deacylated tRNA move to the P and E sites, respectively. Catalyzes the coordinated movement of the two tRNA molecules, the mRNA and conformational changes in the ribosome. This is Elongation factor G from Paramagnetospirillum magneticum (strain ATCC 700264 / AMB-1) (Magnetospirillum magneticum).